The following is a 1003-amino-acid chain: Translation initiation factor IF-2 (1003 aa).

The interval serine 36 to methionine 392 is disordered. Residues alanine 62 to alanine 151 show a composition bias toward low complexity. 2 stretches are compositionally biased toward pro residues: residues aspartate 178–lysine 190 and proline 213–glycine 230. 2 stretches are compositionally biased toward gly residues: residues proline 231 to arginine 243 and glycine 255 to proline 271. Positions glycine 273–glycine 286 are enriched in low complexity. Residues glycine 329–glycine 372 show a composition bias toward gly residues. Positions arginine 376–lysine 385 are enriched in basic residues. One can recognise a tr-type G domain in the interval lysine 498 to aspartate 670. Residues glycine 507–threonine 514 are G1. Position 507-514 (glycine 507–threonine 514) interacts with GTP. The G2 stretch occupies residues glycine 532 to glycine 536. Residues aspartate 557–glycine 560 form a G3 region. Residues aspartate 557–histidine 561 and asparagine 611–aspartate 614 each bind GTP. Residues asparagine 611–aspartate 614 form a G4 region. Residues serine 647–lysine 649 form a G5 region.

It belongs to the TRAFAC class translation factor GTPase superfamily. Classic translation factor GTPase family. IF-2 subfamily.

Its subcellular location is the cytoplasm. In terms of biological role, one of the essential components for the initiation of protein synthesis. Protects formylmethionyl-tRNA from spontaneous hydrolysis and promotes its binding to the 30S ribosomal subunits. Also involved in the hydrolysis of GTP during the formation of the 70S ribosomal complex. The protein is Translation initiation factor IF-2 of Corynebacterium glutamicum (strain R).